The primary structure comprises 212 residues: MKRYFVTGTDTDCGKTFVTNQLVNYFSSSAAIKPIASGCEYSKNQLVNSDALLHQQQNHLPLEIINPWRFRLPVSPHLSAREDGASIDVHKVADYCLNLQLNDIKKLFIEGAGGLMVPLNEQDTWLDFLKLTRIPVILVVGMKLGCINHTLLTQEVLEINKIKCQGWIANCLDQDMLMLDENISTLEAKLKYPLLARTNYGGKISDICLSSL.

12 to 17 contributes to the ATP binding site; that stretch reads DCGKTF. Mg(2+) is bound at residue Thr16. Residue Lys33 is part of the active site. Ser37 contributes to the substrate binding site. ATP-binding positions include Asp50, 110 to 113, and 170 to 171; these read EGAG and NC. Mg(2+) is bound by residues Asp50 and Glu110.

Belongs to the dethiobiotin synthetase family. In terms of assembly, homodimer. Requires Mg(2+) as cofactor.

It localises to the cytoplasm. The enzyme catalyses (7R,8S)-7,8-diammoniononanoate + CO2 + ATP = (4R,5S)-dethiobiotin + ADP + phosphate + 3 H(+). It participates in cofactor biosynthesis; biotin biosynthesis; biotin from 7,8-diaminononanoate: step 1/2. Its function is as follows. Catalyzes a mechanistically unusual reaction, the ATP-dependent insertion of CO2 between the N7 and N8 nitrogen atoms of 7,8-diaminopelargonic acid (DAPA, also called 7,8-diammoniononanoate) to form a ureido ring. This is ATP-dependent dethiobiotin synthetase BioD from Legionella pneumophila (strain Corby).